The primary structure comprises 172 residues: uncharacterized protein (172 aa).

Residues 1–28 (MAAAGVTAKAGGGTSAAAASLIRARSPA) are compositionally biased toward low complexity. Residues 1–172 (MAAAGVTAKA…GGRRSGRDAG (172 aa)) form a disordered region. Residues 58-68 (PRRRSRARRGH) show a composition bias toward basic residues. Residues 80 to 100 (TVGGEGQASQIGGGGGGGGGR) are compositionally biased toward gly residues. The segment covering 129–138 (PGLASSPGVA) has biased composition (low complexity). Residues 139 to 165 (PAGGSGGLWSGAGLCSGLGARGFPGGR) are compositionally biased toward gly residues.

This is an uncharacterized protein from Homo sapiens (Human).